The chain runs to 958 residues: Probable protein phosphatase DDB_G0282105 (958 aa).

A run of 2 helical transmembrane segments spans residues 2 to 22 (VLMM…SLMV) and 26 to 46 (FLEF…ILFF). Residues 142 to 330 (SASQQSELTN…KDKERERSSS (189 aa)) are a coiled coil. Over residues 312–328 (QEKEKQKLEKDKERERS) the composition is skewed to basic and acidic residues. Disordered stretches follow at residues 312–361 (QEKE…PIPI), 380–421 (SVNG…PKFK), 445–475 (HLGS…TTPI), 491–525 (ITSP…ILSP), and 619–659 (NNNN…NDNK). Low complexity-rich tracts occupy residues 329–361 (SSFS…PIPI), 390–401 (SSVSPPSSSYLR), 452–475 (TPAN…TTPI), 491–515 (ITSP…SSSS), and 619–655 (NNNN…NNNK). Residues 613-666 (NFLKTNNNNNKNNIEESNNNNNNNNNNNNNNNNNNNNNNNNNKNDNKEVNSKLE) adopt a coiled-coil conformation. Positions 675–958 (KIGLRRAKKK…DNVTVIIVKL (284 aa)) constitute a PPM-type phosphatase domain. Mn(2+) is bound by residues Asp722, Gly723, Asp905, and Asp949.

The protein in the C-terminal section; belongs to the PP2C family. Mg(2+) serves as cofactor. Mn(2+) is required as a cofactor.

The protein resides in the membrane. The catalysed reaction is O-phospho-L-seryl-[protein] + H2O = L-seryl-[protein] + phosphate. It catalyses the reaction O-phospho-L-threonyl-[protein] + H2O = L-threonyl-[protein] + phosphate. The chain is Probable protein phosphatase DDB_G0282105 from Dictyostelium discoideum (Social amoeba).